The primary structure comprises 145 residues: D-aminoacyl-tRNA deacylase (145 aa).

The Gly-cisPro motif, important for rejection of L-amino acids signature appears at 137-138 (GP).

It belongs to the DTD family. Homodimer.

The protein localises to the cytoplasm. The catalysed reaction is glycyl-tRNA(Ala) + H2O = tRNA(Ala) + glycine + H(+). The enzyme catalyses a D-aminoacyl-tRNA + H2O = a tRNA + a D-alpha-amino acid + H(+). In terms of biological role, an aminoacyl-tRNA editing enzyme that deacylates mischarged D-aminoacyl-tRNAs. Also deacylates mischarged glycyl-tRNA(Ala), protecting cells against glycine mischarging by AlaRS. Acts via tRNA-based rather than protein-based catalysis; rejects L-amino acids rather than detecting D-amino acids in the active site. By recycling D-aminoacyl-tRNA to D-amino acids and free tRNA molecules, this enzyme counteracts the toxicity associated with the formation of D-aminoacyl-tRNA entities in vivo and helps enforce protein L-homochirality. The protein is D-aminoacyl-tRNA deacylase of Pseudomonas entomophila (strain L48).